The primary structure comprises 55 residues: Large ribosomal subunit protein bL33 (55 aa).

This sequence belongs to the bacterial ribosomal protein bL33 family.

This chain is Large ribosomal subunit protein bL33, found in Rhodopseudomonas palustris (strain BisB18).